The primary structure comprises 309 residues: MKSSVLMTALCVAGSLAAEQISPPNEVVVTAKKVVVVTTTVTTTIPCPTVIPTTSYKPEPTSKPPVIPPVPTSSAEPLPPPPVEPSTIPCPEPGTSTYAPPPPPPPPTSAPAPPAPPPPPPSSAPAPPAPPPSQPSQGPAPPPPPPGKDYKEVAGYHHNVHRSNHSAPALTWSSALESSARKLAESCNYGHDTSIDGGGYGQNIGYQSGYNNVAALLTEQMYNEEAILFEGNYGNNNPSNFHSWGHFTQMVWIGTTHVGCFTAHCSNLGGQGSGGDAYYTVCNYSPPGNVLGQYAENVKPPKGQPVVTV.

The signal sequence occupies residues 1-17 (MKSSVLMTALCVAGSLA). Low complexity predominate over residues 47-59 (CPTVIPTTSYKPE). Positions 47 to 152 (CPTVIPTTSY…PPPPGKDYKE (106 aa)) are disordered. Pro residues-rich tracts occupy residues 61–92 (TSKP…PCPE) and 99–147 (APPP…PPPG). One can recognise an SCP domain in the interval 154–284 (AGYHHNVHRS…GDAYYTVCNY (131 aa)). Asn-164 is a glycosylation site (N-linked (GlcNAc...) asparagine).

Belongs to the CRISP family.

It is found in the secreted. Functionally, secreted protein required for efficient export of lipids such as acetylated sterols. Acts in detoxification of hydrophobic compounds. The sequence is that of Probable pathogenesis-related protein ARB_02861 from Arthroderma benhamiae (strain ATCC MYA-4681 / CBS 112371) (Trichophyton mentagrophytes).